Here is a 289-residue protein sequence, read N- to C-terminus: uncharacterized protein (289 aa).

Positions 268–289 (SDDGYETQWSDGPYSIPSGLSD) are disordered.

This is an uncharacterized protein from Zea mays (Maize).